We begin with the raw amino-acid sequence, 472 residues long: Na(+)/H(+) antiporter NhaA (472 aa).

10 helical membrane-spanning segments follow: residues 24–44 (ISGL…NLPA), 66–86 (LPIG…TVGL), 108–128 (LCAV…TALF), 156–176 (GWAV…ALFA), 196–216 (LLAI…YWFI), 234–254 (VPWI…FEAG), 290–310 (PFSA…VHFE), 312–332 (MSPL…LVVG), 361–381 (MIPA…IASL), and 392–412 (ARFG…VLLS). A disordered region spans residues 422-472 (AAAAAADEEDDESIDGDGIGQPSHTTEPTTPTEHPGTLADGTASVEIDFRH). Residues 427–436 (ADEEDDESID) are compositionally biased toward acidic residues. Over residues 445-456 (HTTEPTTPTEHP) the composition is skewed to low complexity.

It belongs to the NhaA Na(+)/H(+) (TC 2.A.33) antiporter family.

It is found in the cell membrane. The enzyme catalyses Na(+)(in) + 2 H(+)(out) = Na(+)(out) + 2 H(+)(in). Its function is as follows. Na(+)/H(+) antiporter that extrudes sodium in exchange for external protons. The sequence is that of Na(+)/H(+) antiporter NhaA from Bifidobacterium longum (strain NCC 2705).